Here is a 241-residue protein sequence, read N- to C-terminus: SURF1-like protein (241 aa).

A run of 2 helical transmembrane segments spans residues 5–25 and 199–219; these read LTVLITFIILVLLGFWQLNRL and LEYAFTWFGLAASLVVIYRIY.

This sequence belongs to the SURF1 family.

It is found in the cell membrane. The protein is SURF1-like protein of Rickettsia bellii (strain RML369-C).